The chain runs to 483 residues: Glutamyl-tRNA(Gln) amidotransferase subunit A (483 aa).

Residues Lys-75 and Ser-150 each act as charge relay system in the active site. Ser-174 (acyl-ester intermediate) is an active-site residue.

The protein belongs to the amidase family. GatA subfamily. In terms of assembly, heterotrimer of A, B and C subunits.

The enzyme catalyses L-glutamyl-tRNA(Gln) + L-glutamine + ATP + H2O = L-glutaminyl-tRNA(Gln) + L-glutamate + ADP + phosphate + H(+). In terms of biological role, allows the formation of correctly charged Gln-tRNA(Gln) through the transamidation of misacylated Glu-tRNA(Gln) in organisms which lack glutaminyl-tRNA synthetase. The reaction takes place in the presence of glutamine and ATP through an activated gamma-phospho-Glu-tRNA(Gln). This chain is Glutamyl-tRNA(Gln) amidotransferase subunit A, found in Deinococcus geothermalis (strain DSM 11300 / CIP 105573 / AG-3a).